Here is a 227-residue protein sequence, read N- to C-terminus: Ribonuclease 3 (227 aa).

The RNase III domain occupies 4–133; that stretch reads FETLEKLLSY…LIAAIYLDSN (130 aa). E46 serves as a coordination point for Mg(2+). D50 is an active-site residue. Positions 119 and 122 each coordinate Mg(2+). Residue E122 is part of the active site. The 69-residue stretch at 158-226 folds into the DRBM domain; the sequence is DPKTALQEWA…ARSLLHRLKN (69 aa).

The protein belongs to the ribonuclease III family. Homodimer. Mg(2+) is required as a cofactor.

It is found in the cytoplasm. It catalyses the reaction Endonucleolytic cleavage to 5'-phosphomonoester.. Its function is as follows. Digests double-stranded RNA. Involved in the processing of primary rRNA transcript to yield the immediate precursors to the large and small rRNAs (23S and 16S). Processes some mRNAs, and tRNAs when they are encoded in the rRNA operon. Processes pre-crRNA and tracrRNA of type II CRISPR loci if present in the organism. This Rickettsia massiliae (strain Mtu5) protein is Ribonuclease 3.